A 222-amino-acid chain; its full sequence is Phosphoribosylformylglycinamidine synthase subunit PurQ (222 aa).

The region spanning 2–222 (KAAVITFPGS…RALLGGMALV (221 aa)) is the Glutamine amidotransferase type-1 domain. C86 functions as the Nucleophile in the catalytic mechanism. Active-site residues include H194 and E196.

As to quaternary structure, part of the FGAM synthase complex composed of 1 PurL, 1 PurQ and 2 PurS subunits.

The protein resides in the cytoplasm. It catalyses the reaction N(2)-formyl-N(1)-(5-phospho-beta-D-ribosyl)glycinamide + L-glutamine + ATP + H2O = 2-formamido-N(1)-(5-O-phospho-beta-D-ribosyl)acetamidine + L-glutamate + ADP + phosphate + H(+). The catalysed reaction is L-glutamine + H2O = L-glutamate + NH4(+). It participates in purine metabolism; IMP biosynthesis via de novo pathway; 5-amino-1-(5-phospho-D-ribosyl)imidazole from N(2)-formyl-N(1)-(5-phospho-D-ribosyl)glycinamide: step 1/2. Part of the phosphoribosylformylglycinamidine synthase complex involved in the purines biosynthetic pathway. Catalyzes the ATP-dependent conversion of formylglycinamide ribonucleotide (FGAR) and glutamine to yield formylglycinamidine ribonucleotide (FGAM) and glutamate. The FGAM synthase complex is composed of three subunits. PurQ produces an ammonia molecule by converting glutamine to glutamate. PurL transfers the ammonia molecule to FGAR to form FGAM in an ATP-dependent manner. PurS interacts with PurQ and PurL and is thought to assist in the transfer of the ammonia molecule from PurQ to PurL. The sequence is that of Phosphoribosylformylglycinamidine synthase subunit PurQ from Cereibacter sphaeroides (strain ATCC 17023 / DSM 158 / JCM 6121 / CCUG 31486 / LMG 2827 / NBRC 12203 / NCIMB 8253 / ATH 2.4.1.) (Rhodobacter sphaeroides).